The chain runs to 227 residues: 2,3-bisphosphoglycerate-dependent phosphoglycerate mutase (227 aa).

Substrate contacts are provided by residues 7–14, 20–21, R59, 86–89, K97, 113–114, and 182–183; these read RHGQSEWN, TG, ERHY, RR, and GN. The active-site Tele-phosphohistidine intermediate is H8. E86 (proton donor/acceptor) is an active-site residue.

It belongs to the phosphoglycerate mutase family. BPG-dependent PGAM subfamily. Homodimer.

It catalyses the reaction (2R)-2-phosphoglycerate = (2R)-3-phosphoglycerate. The protein operates within carbohydrate degradation; glycolysis; pyruvate from D-glyceraldehyde 3-phosphate: step 3/5. Its function is as follows. Catalyzes the interconversion of 2-phosphoglycerate and 3-phosphoglycerate. The chain is 2,3-bisphosphoglycerate-dependent phosphoglycerate mutase from Neisseria gonorrhoeae (strain ATCC 700825 / FA 1090).